The primary structure comprises 212 residues: Large ribosomal subunit protein uL3 (212 aa).

This sequence belongs to the universal ribosomal protein uL3 family. Part of the 50S ribosomal subunit. Forms a cluster with proteins L14 and L19.

One of the primary rRNA binding proteins, it binds directly near the 3'-end of the 23S rRNA, where it nucleates assembly of the 50S subunit. This chain is Large ribosomal subunit protein uL3, found in Ruminiclostridium cellulolyticum (strain ATCC 35319 / DSM 5812 / JCM 6584 / H10) (Clostridium cellulolyticum).